A 23-amino-acid chain; its full sequence is Protein male-specific 40 (23 aa).

As to expression, during early embryogenesis expression is initially detected at the early cleavage stages in the nucleus of two discrete cells. Subsequently, expression is abundant in the cytoplasm of the newly formed pole cells. Male-specific expression during the third larval instar.

It is found in the cytoplasm. The protein resides in the nucleus. In Drosophila melanogaster (Fruit fly), this protein is Protein male-specific 40.